We begin with the raw amino-acid sequence, 482 residues long: GDP-D-glucose phosphorylase 1 (482 aa).

The segment at 1–21 (MEPFPRILDDRLPRNMRRPRP) is disordered. His-255 functions as the Tele-GMP-histidine intermediate in the catalytic mechanism. A disordered region spans residues 461–482 (MPRSPSIRHRSSTRAQSDEGSK).

Belongs to the GDPGP1 family. As to expression, expressed throughout the neuronal system, in the spermatheca and anterior hypodermal cells.

The protein localises to the cytoplasm. It carries out the reaction GDP-alpha-D-glucose + phosphate = alpha-D-glucose 1-phosphate + GDP + H(+). Its function is as follows. Specific and highly efficient GDP-D-glucose phosphorylase regulating the levels of GDP-D-glucose in cells. This Caenorhabditis elegans protein is GDP-D-glucose phosphorylase 1.